A 427-amino-acid polypeptide reads, in one-letter code: Peptidyl-prolyl cis-trans isomerase sig-7 (427 aa).

The region spanning E6 to V161 is the PPIase cyclophilin-type domain. Residues D195–M227 adopt a coiled-coil conformation. An RRM domain is found at N241–S319. Residues Q322 to E334 show a composition bias toward polar residues. The interval Q322–R427 is disordered. A compositionally biased stretch (basic residues) spans S351–K370. Basic and acidic residues predominate over residues S384 to R427.

Belongs to the cyclophilin-type PPIase family. PPIL4 subfamily. As to quaternary structure, interacts with ama-1, the catalytic subunit of the RNA polymerase II (RNA pol II) complex. As to expression, ubiquitous.

It is found in the nucleus. It localises to the nucleoplasm. The protein resides in the chromosome. The enzyme catalyses [protein]-peptidylproline (omega=180) = [protein]-peptidylproline (omega=0). Probable PPIase that accelerates the folding of proteins. It catalyzes the cis-trans isomerization of proline imidic peptide bonds in oligopeptides. Involved in RNA polymerase II (RNA pol II)-mediated transcription elongation, and in primary transcript splicing, including co-transcriptional trans-splicing, in association with the catalytic subunit of the RNA pol II complex ama-1. Also plays a role in the regulation of elongation-dependent phosphorylation of ama-1 to control transcription. Involved in the transcription of several genes during embryogenesis and in particular, of genes related to developmental processes such as gastrulation, and also regulates transcription in germ cells from embryogenesis to adulthood. The protein is Peptidyl-prolyl cis-trans isomerase sig-7 of Caenorhabditis elegans.